The primary structure comprises 498 residues: WD repeat-containing protein 55 homolog (498 aa).

A disordered region spans residues 1 to 133 (MHTHNNFKTP…TFDLDEDDET (133 aa)). Composition is skewed to acidic residues over residues 12 to 23 (DEDELDDLDEDM), 31 to 48 (IEQEVLNESDSDNDEYDL), and 83 to 95 (SDSDDSMLDDAGD). Residues 114 to 123 (PSGSNRQSEA) show a composition bias toward polar residues. WD repeat units follow at residues 155-194 (KLEDFITDICFHPDRDIIALATIIGDVHLYEYDNEANKLL), 199-238 (VHSKACRDVEFTEDGRFLLTCSKDKCVMVTDMETEKLKKL), 242-280 (AHDDAINTLHVLNENLFATGDDAGTVKLWDLRTKNAIFE), 283-322 (ELEDQITQLTTNDQSKLLLATSADGYLTTFNIAARKMYVQ), 325-364 (PYEEELSCMGIYRGDSKLVVGTSKGRLYTYNWGQFGYHCD), and 409-448 (QHNMPIESLDVNSNGELIASSSHNNDVRFWNVKYFEDFGD).

It belongs to the WD repeat WDR55 family.

In Drosophila erecta (Fruit fly), this protein is WD repeat-containing protein 55 homolog.